We begin with the raw amino-acid sequence, 306 residues long: Aspartate carbamoyltransferase catalytic subunit (306 aa).

Arg51 and Thr52 together coordinate carbamoyl phosphate. Residue Lys79 coordinates L-aspartate. Carbamoyl phosphate-binding residues include Arg101, His130, and Gln133. The L-aspartate site is built by Arg163 and Arg215. Carbamoyl phosphate is bound by residues Gly256 and Pro257.

The protein belongs to the aspartate/ornithine carbamoyltransferase superfamily. ATCase family. As to quaternary structure, heterododecamer (2C3:3R2) of six catalytic PyrB chains organized as two trimers (C3), and six regulatory PyrI chains organized as three dimers (R2).

It carries out the reaction carbamoyl phosphate + L-aspartate = N-carbamoyl-L-aspartate + phosphate + H(+). The protein operates within pyrimidine metabolism; UMP biosynthesis via de novo pathway; (S)-dihydroorotate from bicarbonate: step 2/3. Its function is as follows. Catalyzes the condensation of carbamoyl phosphate and aspartate to form carbamoyl aspartate and inorganic phosphate, the committed step in the de novo pyrimidine nucleotide biosynthesis pathway. The polypeptide is Aspartate carbamoyltransferase catalytic subunit (Ehrlichia ruminantium (strain Welgevonden)).